A 348-amino-acid polypeptide reads, in one-letter code: Phospho-2-dehydro-3-deoxyheptonate aldolase, Trp-sensitive (348 aa).

This sequence belongs to the class-I DAHP synthase family.

It carries out the reaction D-erythrose 4-phosphate + phosphoenolpyruvate + H2O = 7-phospho-2-dehydro-3-deoxy-D-arabino-heptonate + phosphate. It participates in metabolic intermediate biosynthesis; chorismate biosynthesis; chorismate from D-erythrose 4-phosphate and phosphoenolpyruvate: step 1/7. In terms of biological role, stereospecific condensation of phosphoenolpyruvate (PEP) and D-erythrose-4-phosphate (E4P) giving rise to 3-deoxy-D-arabino-heptulosonate-7-phosphate (DAHP). This is Phospho-2-dehydro-3-deoxyheptonate aldolase, Trp-sensitive (aroH) from Salmonella typhimurium (strain LT2 / SGSC1412 / ATCC 700720).